The chain runs to 523 residues: uncharacterized protein (523 aa).

A compositionally biased stretch (polar residues) spans 1 to 14 (MAVSKNIKSNVSTH). Disordered stretches follow at residues 1–36 (MAVS…VKKA), 51–187 (HSSE…VVSS), and 200–224 (QKQE…EMEK). Positions 87-97 (DNRGTRLKGDI) are enriched in basic and acidic residues. Composition is skewed to acidic residues over residues 117–130 (DMEE…DNEY) and 138–182 (QDDD…DDEN). A compositionally biased stretch (basic and acidic residues) spans 200-210 (QKQEKEEEKQP).

This sequence belongs to the AATF family.

This is an uncharacterized protein from Dictyostelium discoideum (Social amoeba).